The sequence spans 155 residues: Transcriptional regulator MraZ (155 aa).

2 SpoVT-AbrB domains span residues 7–54 (TYEC…PMEE) and 83–126 (VKTV…DKDK).

Belongs to the MraZ family. As to quaternary structure, forms oligomers.

Its subcellular location is the cytoplasm. The protein localises to the nucleoid. The protein is Transcriptional regulator MraZ of Christiangramia forsetii (strain DSM 17595 / CGMCC 1.15422 / KT0803) (Gramella forsetii).